Consider the following 274-residue polypeptide: Large ribosomal subunit protein uL2cz/uL2cy (274 aa).

Disordered regions lie at residues 1–25 (MAIH…VKSN) and 223–274 (MNPV…RRTK).

It belongs to the universal ribosomal protein uL2 family. As to quaternary structure, part of the 50S ribosomal subunit.

The protein localises to the plastid. The protein resides in the chloroplast. The protein is Large ribosomal subunit protein uL2cz/uL2cy (rpl2-A) of Citrus sinensis (Sweet orange).